A 284-amino-acid polypeptide reads, in one-letter code: Small ribosomal subunit protein uS5z (284 aa).

A compositionally biased stretch (basic and acidic residues) spans 1-19 (MAERGGEGGAERGGDRGDF). The interval 1–51 (MAERGGEGGAERGGDRGDFGRGFGGGRGGGRGRDRGPRGRGRRGGRASEET) is disordered. The segment covering 20–29 (GRGFGGGRGG) has biased composition (gly residues). The S5 DRBM domain occupies 95-158 (LKDEVMKIMP…ILAKLSVVPV (64 aa)).

This sequence belongs to the universal ribosomal protein uS5 family.

The polypeptide is Small ribosomal subunit protein uS5z (RPS2A) (Arabidopsis thaliana (Mouse-ear cress)).